The sequence spans 101 residues: Cilia- and flagella-associated protein 141 (101 aa).

In terms of assembly, microtubule inner protein component of sperm flagellar doublet microtubules. In terms of tissue distribution, expressed in trachea multiciliated cells.

The protein resides in the cytoplasm. The protein localises to the cytoskeleton. It is found in the cilium axoneme. It localises to the flagellum axoneme. Functionally, microtubule inner protein (MIP) part of the dynein-decorated doublet microtubules (DMTs) in cilia axoneme, which is required for motile cilia beating. This chain is Cilia- and flagella-associated protein 141, found in Bos taurus (Bovine).